Here is a 598-residue protein sequence, read N- to C-terminus: IQ calmodulin-binding motif-containing protein 1 (598 aa).

The interval 1–157 (MKPAGTDPRI…SLFWLLGGHV (157 aa)) is interaction with BBS1, BBS8 and BBS9. Residues 287–598 (QEVEEQKLHK…MLFIGGTKPP (312 aa)) are interaction with CEP290, BBS1, BBS2, BBS4, BBS5, BBS7, BBS8 and BBS9. 4 consecutive IQ domains span residues 294-317 (LHKA…LKKL), 318-338 (PSAV…MMLE), 387-416 (EEKS…SLTE), and 417-437 (YKAA…CRKK). The stretch at 336–362 (MLELNRQKEEEDLRLKLQLQRQRAMRL) forms a coiled coil. Residues 530-598 (AEGKEPEQFL…MLFIGGTKPP (69 aa)) are interaction with BBS1, BBS2, BBS4, BBS7, BBS8 and BBS9.

As to quaternary structure, interacts with calmodulin. Interacts with CEP290/NPHP6; IQCB1/NPHP5 and CEP290/NPHP6; are proposed to form a functional NPHP5-6 module localized to the centrosome. Interacts with ATXN10. Interacts with NPHP1, INVS, NPHP4 and RPGRIP1L; these interactions likely require additional interactors. Associates with the BBSome complex; interacts with BBS1, BBS2, BBS4, BBS5, BBS7, BBS8 and BBS9. In terms of tissue distribution, localized to the outer segment and connecting cilia of photoreceptor cells.

The protein localises to the cytoplasm. Its subcellular location is the cytoskeleton. The protein resides in the microtubule organizing center. It is found in the centrosome. Involved in ciliogenesis. The function in an early step in cilia formation depends on its association with CEP290/NPHP6. Involved in regulation of the BBSome complex integrity, specifically for presence of BBS2 and BBS5 in the complex, and in ciliary targeting of selected BBSome cargos. May play a role in controlling entry of the BBSome complex to cilia possibly implicating CEP290/NPHP6. This chain is IQ calmodulin-binding motif-containing protein 1 (Iqcb1), found in Mus musculus (Mouse).